We begin with the raw amino-acid sequence, 136 residues long: Cytidine deaminase (136 aa).

Residues 1–128 (MDVEKLIAES…KLLPGAFSKE (128 aa)) enclose the CMP/dCMP-type deaminase domain. 42-44 (NIE) contacts substrate. Cys-53 contributes to the Zn(2+) binding site. The Proton donor role is filled by Glu-55. Positions 86 and 89 each coordinate Zn(2+).

Belongs to the cytidine and deoxycytidylate deaminase family. It depends on Zn(2+) as a cofactor.

The catalysed reaction is cytidine + H2O + H(+) = uridine + NH4(+). The enzyme catalyses 2'-deoxycytidine + H2O + H(+) = 2'-deoxyuridine + NH4(+). This enzyme scavenges exogenous and endogenous cytidine and 2'-deoxycytidine for UMP synthesis. This is Cytidine deaminase (cdd) from Sporosarcina psychrophila (Bacillus psychrophilus).